The sequence spans 455 residues: Ribulose bisphosphate carboxylase large chain (455 aa).

At lysine 5 the chain carries N6,N6,N6-trimethyllysine. Asparagine 114 and threonine 164 together coordinate substrate. Lysine 166 (proton acceptor) is an active-site residue. A substrate-binding site is contributed by lysine 168. Residues lysine 192, aspartate 194, and glutamate 195 each contribute to the Mg(2+) site. Residue lysine 192 is modified to N6-carboxylysine. The active-site Proton acceptor is the histidine 285. Positions 286, 318, and 370 each coordinate substrate.

This sequence belongs to the RuBisCO large chain family. Type I subfamily. Heterohexadecamer of 8 large chains and 8 small chains; disulfide-linked. The disulfide link is formed within the large subunit homodimers. Mg(2+) is required as a cofactor. Post-translationally, the disulfide bond which can form in the large chain dimeric partners within the hexadecamer appears to be associated with oxidative stress and protein turnover.

The protein resides in the plastid. Its subcellular location is the chloroplast. It catalyses the reaction 2 (2R)-3-phosphoglycerate + 2 H(+) = D-ribulose 1,5-bisphosphate + CO2 + H2O. The catalysed reaction is D-ribulose 1,5-bisphosphate + O2 = 2-phosphoglycolate + (2R)-3-phosphoglycerate + 2 H(+). Functionally, ruBisCO catalyzes two reactions: the carboxylation of D-ribulose 1,5-bisphosphate, the primary event in carbon dioxide fixation, as well as the oxidative fragmentation of the pentose substrate in the photorespiration process. Both reactions occur simultaneously and in competition at the same active site. The chain is Ribulose bisphosphate carboxylase large chain from Lupinus albus (White lupine).